A 357-amino-acid chain; its full sequence is Maleylacetate reductase 1 (357 aa).

It belongs to the iron-containing alcohol dehydrogenase family.

The catalysed reaction is 3-oxoadipate + NAD(+) = maleylacetate + NADH + H(+). The enzyme catalyses 3-oxoadipate + NADP(+) = maleylacetate + NADPH + H(+). It participates in aromatic compound metabolism; 3-chlorocatechol degradation. Its function is as follows. Plays a major role in the degradation of chloroaromatic compounds by channeling maleylacetate and some of its substituted derivatives into the 3-oxoadipate pathway. This enzyme converts maleylacetate and 2-chloromaleylacetate with similar efficiencies. This is Maleylacetate reductase 1 (macA) from Rhodococcus opacus (Nocardia opaca).